A 447-amino-acid polypeptide reads, in one-letter code: Probable glycine dehydrogenase (decarboxylating) subunit 1 (447 aa).

The protein belongs to the GcvP family. N-terminal subunit subfamily. As to quaternary structure, the glycine cleavage system is composed of four proteins: P, T, L and H. In this organism, the P 'protein' is a heterodimer of two subunits.

The catalysed reaction is N(6)-[(R)-lipoyl]-L-lysyl-[glycine-cleavage complex H protein] + glycine + H(+) = N(6)-[(R)-S(8)-aminomethyldihydrolipoyl]-L-lysyl-[glycine-cleavage complex H protein] + CO2. Functionally, the glycine cleavage system catalyzes the degradation of glycine. The P protein binds the alpha-amino group of glycine through its pyridoxal phosphate cofactor; CO(2) is released and the remaining methylamine moiety is then transferred to the lipoamide cofactor of the H protein. The sequence is that of Probable glycine dehydrogenase (decarboxylating) subunit 1 from Halalkalibacterium halodurans (strain ATCC BAA-125 / DSM 18197 / FERM 7344 / JCM 9153 / C-125) (Bacillus halodurans).